The sequence spans 396 residues: Lipid-A-disaccharide synthase (396 aa).

This sequence belongs to the LpxB family.

The enzyme catalyses a lipid X + a UDP-2-N,3-O-bis[(3R)-3-hydroxyacyl]-alpha-D-glucosamine = a lipid A disaccharide + UDP + H(+). It participates in bacterial outer membrane biogenesis; LPS lipid A biosynthesis. In terms of biological role, condensation of UDP-2,3-diacylglucosamine and 2,3-diacylglucosamine-1-phosphate to form lipid A disaccharide, a precursor of lipid A, a phosphorylated glycolipid that anchors the lipopolysaccharide to the outer membrane of the cell. The polypeptide is Lipid-A-disaccharide synthase (Rhodopseudomonas palustris (strain BisB18)).